A 286-amino-acid chain; its full sequence is ATP synthase gamma chain (286 aa).

This sequence belongs to the ATPase gamma chain family. F-type ATPases have 2 components, CF(1) - the catalytic core - and CF(0) - the membrane proton channel. CF(1) has five subunits: alpha(3), beta(3), gamma(1), delta(1), epsilon(1). CF(0) has three main subunits: a, b and c.

Its subcellular location is the cell inner membrane. Its function is as follows. Produces ATP from ADP in the presence of a proton gradient across the membrane. The gamma chain is believed to be important in regulating ATPase activity and the flow of protons through the CF(0) complex. In Shewanella oneidensis (strain ATCC 700550 / JCM 31522 / CIP 106686 / LMG 19005 / NCIMB 14063 / MR-1), this protein is ATP synthase gamma chain.